The primary structure comprises 455 residues: MELLIKLITFLLFSMPAITSSQYLGNNLLTSRKIFLKQEEISSYAVVFDAGSTGSRIHVYHFNQNLDLLHIGKGVEYYNKITPGLSSYANNPEQAAKSLIPLLEQAEDVVPDDLQPKTPVRLGATAGLRLLNGDASEKILQSVRDMLSNRSTFNVQPDAVSIIDGTQEGSYLWVTVNYALGNLGKKYTKTVGVIDLGGGSVQMAYAVSKKTAKNAPKVADGDDPYIKKVVLKGIPYDLYVHSYLHFGREASRAEILKLTPRSPNPCLLAGFNGIYTYSGEEFKATAYTSGANFNKCKNTIRKALKLNYPCPYQNCTFGGIWNGGGGNGQKNLFASSSFFYLPEDTGMVDASTPNFILRPVDIETKAKEACALNFEDAKSTYPFLDKKNVASYVCMDLIYQYVLLVDGFGLDPLQKITSGKEIEYQDAIVEAAWPLGNAVEAISALPKFERLMYFV.

The active-site Proton acceptor is E168.

This sequence belongs to the GDA1/CD39 NTPase family.

The protein localises to the nucleus. It catalyses the reaction a ribonucleoside 5'-triphosphate + H2O = a ribonucleoside 5'-diphosphate + phosphate + H(+). Might be involved in RNA transport out of nuclei. The polypeptide is Nucleoside-triphosphatase (Pisum sativum (Garden pea)).